We begin with the raw amino-acid sequence, 146 residues long: 16.0 kDa heat shock protein, peroxisomal (146 aa).

One can recognise a sHSP domain in the interval Trp23–Ser143. The Microbody targeting signal motif lies at Ser144 to Leu146.

The protein belongs to the small heat shock protein (HSP20) family. As to quaternary structure, may form oligomeric structures.

It is found in the peroxisome. In Oryza sativa subsp. japonica (Rice), this protein is 16.0 kDa heat shock protein, peroxisomal (HSP16.0).